The following is a 231-amino-acid chain: Uridylate kinase (231 aa).

Residue 6-9 (KLSG) coordinates ATP. The involved in allosteric activation by GTP stretch occupies residues 14–19 (GEGGRG). Residues Gly49 and Arg53 each coordinate ATP. UMP is bound by residues Asp66 and 127–134 (TSNPFFTT). ATP-binding residues include Thr154, Tyr160, and Asp163.

The protein belongs to the UMP kinase family. Homohexamer.

The protein resides in the cytoplasm. It catalyses the reaction UMP + ATP = UDP + ADP. The protein operates within pyrimidine metabolism; CTP biosynthesis via de novo pathway; UDP from UMP (UMPK route): step 1/1. With respect to regulation, allosterically activated by GTP. Inhibited by UTP. Catalyzes the reversible phosphorylation of UMP to UDP. The polypeptide is Uridylate kinase (Thermotoga maritima (strain ATCC 43589 / DSM 3109 / JCM 10099 / NBRC 100826 / MSB8)).